A 709-amino-acid polypeptide reads, in one-letter code: DNA ligase (709 aa).

NAD(+)-binding positions include 34–38 (DAEYD), 83–84 (SL), and Glu115. Lys117 serves as the catalytic N6-AMP-lysine intermediate. Residues Arg138, Glu185, Lys301, and Lys325 each coordinate NAD(+). 4 residues coordinate Zn(2+): Cys419, Cys422, Cys437, and Cys443. The region spanning 602–691 (RQSDTLAGKT…AEPPPSPPPP (90 aa)) is the BRCT domain. The interval 679 to 709 (GTTAEPPPSPPPPPPETNTDGNQLLLPLDGE) is disordered. A compositionally biased stretch (pro residues) spans 683-694 (EPPPSPPPPPPE).

Belongs to the NAD-dependent DNA ligase family. LigA subfamily. Mg(2+) serves as cofactor. The cofactor is Mn(2+).

The enzyme catalyses NAD(+) + (deoxyribonucleotide)n-3'-hydroxyl + 5'-phospho-(deoxyribonucleotide)m = (deoxyribonucleotide)n+m + AMP + beta-nicotinamide D-nucleotide.. Functionally, DNA ligase that catalyzes the formation of phosphodiester linkages between 5'-phosphoryl and 3'-hydroxyl groups in double-stranded DNA using NAD as a coenzyme and as the energy source for the reaction. It is essential for DNA replication and repair of damaged DNA. This Chloroflexus aurantiacus (strain ATCC 29364 / DSM 637 / Y-400-fl) protein is DNA ligase.